A 95-amino-acid polypeptide reads, in one-letter code: DNA-directed RNA polymerase subunit Rpo6 (95 aa).

This sequence belongs to the archaeal Rpo6/eukaryotic RPB6 RNA polymerase subunit family. Part of the RNA polymerase complex.

The protein localises to the cytoplasm. The catalysed reaction is RNA(n) + a ribonucleoside 5'-triphosphate = RNA(n+1) + diphosphate. In terms of biological role, DNA-dependent RNA polymerase (RNAP) catalyzes the transcription of DNA into RNA using the four ribonucleoside triphosphates as substrates. This chain is DNA-directed RNA polymerase subunit Rpo6, found in Saccharolobus islandicus (strain M.16.27) (Sulfolobus islandicus).